The following is a 961-amino-acid chain: Glycine dehydrogenase (decarboxylating) (961 aa).

The residue at position 709 (Lys709) is an N6-(pyridoxal phosphate)lysine.

It belongs to the GcvP family. As to quaternary structure, the glycine cleavage system is composed of four proteins: P, T, L and H. It depends on pyridoxal 5'-phosphate as a cofactor.

The catalysed reaction is N(6)-[(R)-lipoyl]-L-lysyl-[glycine-cleavage complex H protein] + glycine + H(+) = N(6)-[(R)-S(8)-aminomethyldihydrolipoyl]-L-lysyl-[glycine-cleavage complex H protein] + CO2. In terms of biological role, the glycine cleavage system catalyzes the degradation of glycine. The P protein binds the alpha-amino group of glycine through its pyridoxal phosphate cofactor; CO(2) is released and the remaining methylamine moiety is then transferred to the lipoamide cofactor of the H protein. The chain is Glycine dehydrogenase (decarboxylating) from Streptomyces avermitilis (strain ATCC 31267 / DSM 46492 / JCM 5070 / NBRC 14893 / NCIMB 12804 / NRRL 8165 / MA-4680).